Consider the following 1099-residue polypeptide: MSQPGIPASGGSSTGLQAQNGAASASGSPYTNGPVQNALMSSQVSVSQGYNSQLPGSYPHLIPAKTLNPVSGQSNSGGSQTVSPLSNYQGPGQALYGPPVASHPVTPSLHSGPSPQMPLPTSQNPAATPMPSGSFLPGASVSSPSNWQYNYLSQTNHCPRASSQPTMTGNTNLMSPQYVSSGDSSLQNNIIKSGSALPLVNPPLPTTFQPGAPLGPPPTGGPPPVRALTPQKLTPRTMPQPSFNSTSNQEGIISNTNNGSMVVHNNYDEIEGGGFLATSQPTTKNPTMSRSVGYSYPSLPPGYQNTAPPSTTGAGLPPSSLNYPSGPQAFTQTPLGANHLTSSMSGLSLHPEGLRVINLLQERNMLPSTPLQPPVPNLHEDIQKLNCNPELFRCTLTSIPQTQALLNKAKLPLGLLLHPFKDLVQLPVVTSSTIVRCRSCRTYINPFVSFLDQRRWKCNLCYRVNDVPEEFMYNPLTRVYGEPHRRPEVQNATIEFMAPSEYMLRPPQPPVYLFVFDVSHNAIETGYLNSVCQSLLDNLDLLPGNTRTKIGFITFDSTIHFYSLQEGLSQPQMLIVSDIEDVFIPMPENLLVNLNESKELVQDLLKTLPQMFTKTLETQSALGPALQAAFKLMSPTGGRMSVFQTQLPTLGVGALKPREEPNQRSSAKEIHLTPSTDFYKKLALDCSGQQVAVDLFLLSGQYSDLASLGCISRYSAGSVYYYPSYHHQHNPIQVQKLEKELQRYLTRKIGFEAVMRIRCTKGLSIHTFHGNFFVRSTDLLSLPNVNPDAGYAVQMSVEESLTDTQLVSFQSALLYTSSKGERRIRVHTLCLPVVSTLNEVFLGADVQAISGLLANMAVDRSVTASLSDARDALVNAVIDSLSAYRSSALSNQQPGLMVPFSLRLFPLFVLALLKQKSFQTGTNARLDERIFAMCQVKNQPLVYLMLTTHPSLYRVDNLSDEGAISINDRTIPQPPILQLSVEKLSRDGAFLMDAGSVLMLWVGRNCGQNFLSQVLGVENYALIPQTMTDLPELDTPESARTIAFISWLREQRPFYPILYVIRDESPMKANFLQNMVEDRTESALSYYEFLLHIQQQVNK.

Disordered stretches follow at residues 1 to 36 (MSQPGIPASGGSSTGLQAQNGAASASGSPYTNGPVQ), 65 to 139 (KTLN…LPGA), and 279 to 317 (SQPTTKNPTMSRSVGYSYPSLPPGYQNTAPPSTTGAGLP). Polar residues-rich tracts occupy residues 10–20 (GGSSTGLQAQN), 68–90 (NPVSGQSNSGGSQTVSPLSNYQG), 108–126 (SLHSGPSPQMPLPTSQNPA), 279–292 (SQPTTKNPTMSRSV), and 303–317 (YQNTAPPSTTGAGLP). Zn(2+)-binding residues include Cys-437, Cys-440, Cys-458, and Cys-461. The tract at residues 437–461 (CRSCRTYINPFVSFLDQRRWKCNLC) is zinc finger-like. A Gelsolin-like repeat occupies 972-1044 (PQPPILQLSV…TPESARTIAF (73 aa)).

The protein belongs to the SEC23/SEC24 family. SEC24 subfamily. As to quaternary structure, COPII is composed of at least five proteins: the Sec23/24 complex, the Sec13/31 complex and Sar1. Interacts with TMED2. Interacts (as part of the Sec23/24 complex) with SEC22B; recruits SEC22B into COPII-coated vesicles for its transport from the endoplasmic reticulum to the Golgi. Interacts with STING1; promoting STING1 translocation to COPII vesicles in a STEEP1-dependent manner. Interacts with TMEM39A. Interacts with SACM1L; this interaction is reduced in the absence of TMEM39A. Interacts with kinase FAM20C; transport of FAM20C from the endoplasmic reticulum to the Golgi is likely to be mediated by COPII vesicles.

It localises to the cytoplasmic vesicle. It is found in the COPII-coated vesicle membrane. The protein localises to the endoplasmic reticulum membrane. The protein resides in the cytoplasm. Its subcellular location is the cytosol. In terms of biological role, component of the coat protein complex II (COPII) which promotes the formation of transport vesicles from the endoplasmic reticulum (ER). The coat has two main functions, the physical deformation of the endoplasmic reticulum membrane into vesicles and the selection of cargo molecules for their transport to the Golgi complex. Plays a central role in cargo selection within the COPII complex and together with SEC24B may have a different specificity compared to SEC24C and SEC24D. May package preferentially cargos with cytoplasmic DxE or LxxLE motifs and may also recognize conformational epitopes. The chain is Protein transport protein Sec24A from Bos taurus (Bovine).